The sequence spans 575 residues: Alpha-(1,6)-fucosyltransferase (575 aa).

Topologically, residues 1 to 9 are cytoplasmic; sequence MRPWTGSWR. Residues 10 to 30 form a helical; Signal-anchor for type II membrane protein membrane-spanning segment; that stretch reads WIMLILFAWGTLLFYIGGHLV. The Lumenal segment spans residues 31 to 575; the sequence is RDNDHPDHSS…KVPHVPEAEK (545 aa). Cystine bridges form between cysteine 204-cysteine 266, cysteine 212-cysteine 230, and cysteine 218-cysteine 222. In terms of domain architecture, GT23 spans 206–493; it reads KAKKLVCNIN…PDASANFHSL (288 aa). At serine 278 the chain carries Phosphoserine. An SH3-binding motif is present at residues 299–305; it reads PRPPYLP. Residues 365–366 form an important for donor substrate binding region; the sequence is RR. Cysteine 465 and cysteine 472 form a disulfide bridge. Residues 502–563 form the SH3 domain; it reads QNAHNQIAIY…PSYKVREKIE (62 aa).

Belongs to the glycosyltransferase 23 family. Tyrosine phosphorylated by PKDCC/VLK. In terms of tissue distribution, highest expression found in brain. Also found in heart, lung, spleen and kidney.

It localises to the golgi apparatus. It is found in the golgi stack membrane. It carries out the reaction N(4)-{beta-D-GlcNAc-(1-&gt;2)-alpha-D-Man-(1-&gt;3)-[beta-D-GlcNAc-(1-&gt;2)-alpha-D-Man-(1-&gt;6)]-beta-D-Man-(1-&gt;4)-beta-D-GlcNAc-(1-&gt;4)-beta-D-GlcNAc}-L-asparaginyl-[protein] + GDP-beta-L-fucose = an N(4)-{beta-D-GlcNAc-(1-&gt;2)-alpha-D-Man-(1-&gt;3)-[beta-D-GlcNAc-(1-&gt;2)-alpha-D-Man-(1-&gt;6)]-beta-D-Man-(1-&gt;4)-beta-D-GlcNAc-(1-&gt;4)-[alpha-L-Fuc-(1-&gt;6)]-beta-D-GlcNAc}-L-asparaginyl-[protein] + GDP + H(+). Its pathway is protein modification; protein glycosylation. Its function is as follows. Catalyzes the addition of fucose in alpha 1-6 linkage to the first GlcNAc residue, next to the peptide chains in N-glycans. The protein is Alpha-(1,6)-fucosyltransferase (FUT8) of Bos taurus (Bovine).